We begin with the raw amino-acid sequence, 400 residues long: Phosphoglycerate kinase (400 aa).

Substrate contacts are provided by residues 22–24 (DFN), R38, 61–64 (HLGR), R120, and R153. Residues K206, G297, E328, and 354-357 (GGDT) contribute to the ATP site.

The protein belongs to the phosphoglycerate kinase family. Monomer.

It is found in the cytoplasm. The catalysed reaction is (2R)-3-phosphoglycerate + ATP = (2R)-3-phospho-glyceroyl phosphate + ADP. Its pathway is carbohydrate degradation; glycolysis; pyruvate from D-glyceraldehyde 3-phosphate: step 2/5. The sequence is that of Phosphoglycerate kinase from Campylobacter curvus (strain 525.92).